Consider the following 381-residue polypeptide: Putative 2-heptyl-3-hydroxy-4(1H)-quinolone synthase AqdB1 (381 aa).

It belongs to the 3-hydroxybenzoate 6-hydroxylase family.

The enzyme catalyses 2-heptyl-4(1H)-quinolone + NADH + O2 + H(+) = 2-heptyl-3-hydroxy-4(1H)-quinolone + NAD(+) + H2O. Functionally, could be involved in the degradation of the Pseudomonas aeruginosa quorum sensing signal molecule HHQ (2-heptyl-4-quinolone) to anthranilic acid. May catalyze the hydroxylation of HHQ to PQS (2-heptyl-3-hydroxy-4-quinolone). This is Putative 2-heptyl-3-hydroxy-4(1H)-quinolone synthase AqdB1 from Rhodococcus erythropolis (Arthrobacter picolinophilus).